We begin with the raw amino-acid sequence, 164 residues long: Peptidyl-prolyl cis-trans isomerase (164 aa).

The PPIase cyclophilin-type domain occupies 7–163; it reads FFDLQANGEN…KKITIADCGQ (157 aa).

The protein belongs to the cyclophilin-type PPIase family. PPIase A subfamily.

It localises to the cytoplasm. The enzyme catalyses [protein]-peptidylproline (omega=180) = [protein]-peptidylproline (omega=0). Its activity is regulated as follows. Binds cyclosporin A (CsA). CsA mediates some of its effects via an inhibitory action on PPIase. Functionally, PPIases accelerate the folding of proteins. It catalyzes the cis-trans isomerization of proline imidic peptide bonds in oligopeptides. The protein is Peptidyl-prolyl cis-trans isomerase of Hemicentrotus pulcherrimus (Sea urchin).